A 268-amino-acid chain; its full sequence is Undecaprenyl-diphosphatase (268 aa).

The next 6 helical transmembrane spans lie at 39-59 (SETF…LIYK), 75-95 (LPYF…GLWV), 106-126 (LGPV…TEKV), 179-199 (TEFA…FAWI), 214-234 (LTLA…VKWL), and 243-263 (FIPF…LVAL).

Belongs to the UppP family.

Its subcellular location is the cell inner membrane. It carries out the reaction di-trans,octa-cis-undecaprenyl diphosphate + H2O = di-trans,octa-cis-undecaprenyl phosphate + phosphate + H(+). Its function is as follows. Catalyzes the dephosphorylation of undecaprenyl diphosphate (UPP). Confers resistance to bacitracin. This is Undecaprenyl-diphosphatase from Methylacidiphilum infernorum (isolate V4) (Methylokorus infernorum (strain V4)).